A 328-amino-acid polypeptide reads, in one-letter code: Methionyl-tRNA formyltransferase (328 aa).

110–113 (SLLP) provides a ligand contact to (6S)-5,6,7,8-tetrahydrofolate.

Belongs to the Fmt family.

It carries out the reaction L-methionyl-tRNA(fMet) + (6R)-10-formyltetrahydrofolate = N-formyl-L-methionyl-tRNA(fMet) + (6S)-5,6,7,8-tetrahydrofolate + H(+). Functionally, attaches a formyl group to the free amino group of methionyl-tRNA(fMet). The formyl group appears to play a dual role in the initiator identity of N-formylmethionyl-tRNA by promoting its recognition by IF2 and preventing the misappropriation of this tRNA by the elongation apparatus. The sequence is that of Methionyl-tRNA formyltransferase from Prochlorococcus marinus subsp. pastoris (strain CCMP1986 / NIES-2087 / MED4).